A 239-amino-acid polypeptide reads, in one-letter code: Proteasome activator complex subunit 2 (239 aa).

Alanine 2 is subject to N-acetylalanine. Serine 10 is modified (phosphoserine).

This sequence belongs to the PA28 family. Heterodimer of PSME1 and PSME2, which forms a hexameric ring.

Functionally, implicated in immunoproteasome assembly and required for efficient antigen processing. The PA28 activator complex enhances the generation of class I binding peptides by altering the cleavage pattern of the proteasome. The polypeptide is Proteasome activator complex subunit 2 (PSME2) (Homo sapiens (Human)).